A 456-amino-acid polypeptide reads, in one-letter code: GTP cyclohydrolase 1 (456 aa).

C340, H343, and C412 together coordinate Zn(2+).

Belongs to the GTP cyclohydrolase I family. As to quaternary structure, homodimer. Expressed in leaves and unripe fruits.

The enzyme catalyses GTP + H2O = 7,8-dihydroneopterin 3'-triphosphate + formate + H(+). It functions in the pathway cofactor biosynthesis; 7,8-dihydroneopterin triphosphate biosynthesis; 7,8-dihydroneopterin triphosphate from GTP: step 1/1. In terms of biological role, GTP cyclohydrolase 1 is the first enzyme in the biosynthetic pathway leading to folic acid. The chain is GTP cyclohydrolase 1 (GCH1) from Solanum lycopersicum (Tomato).